We begin with the raw amino-acid sequence, 291 residues long: MIPIQLTVFFMIIYVLESLTIIVQSSLIVAVLGREWLQVRRLMPVDMILISLGISRFCLQWASMLNNFCSYFNLNYVLCNLTITWEFFNILTFWLNSLLTVFYCIKVSSFTHHIFLWLRWRILRLFPWILLGSLMITCVTIIPSAIGNYIQIQLLTMEHLPRNSTVTDKLENFHQYQFQAHTVALVIPFILFLASTIFLMASLTKQIQHHSTGHCNPSMKARFTALRSLAVLFIVFTSYFLTILITIIGTLFDKRCWLWVWEAFVYAFILMHSTSLMLSSPTLKRILKGKC.

Position 1 (Met1) is a topological domain, extracellular. A helical transmembrane segment spans residues 2–22 (IPIQLTVFFMIIYVLESLTII). Residues 23 to 41 (VQSSLIVAVLGREWLQVRR) are Cytoplasmic-facing. A helical membrane pass occupies residues 42–62 (LMPVDMILISLGISRFCLQWA). At 63 to 84 (SMLNNFCSYFNLNYVLCNLTIT) the chain is on the extracellular side. Asn80 is a glycosylation site (N-linked (GlcNAc...) asparagine). Residues 85–105 (WEFFNILTFWLNSLLTVFYCI) form a helical membrane-spanning segment. At 106-125 (KVSSFTHHIFLWLRWRILRL) the chain is on the cytoplasmic side. Residues 126–146 (FPWILLGSLMITCVTIIPSAI) form a helical membrane-spanning segment. Topologically, residues 147 to 182 (GNYIQIQLLTMEHLPRNSTVTDKLENFHQYQFQAHT) are extracellular. Asn163 carries N-linked (GlcNAc...) asparagine glycosylation. A helical transmembrane segment spans residues 183–203 (VALVIPFILFLASTIFLMASL). The Cytoplasmic portion of the chain corresponds to 204-228 (TKQIQHHSTGHCNPSMKARFTALRS). A helical membrane pass occupies residues 229–249 (LAVLFIVFTSYFLTILITIIG). Over 250–257 (TLFDKRCW) the chain is Extracellular. Residues 258–278 (LWVWEAFVYAFILMHSTSLML) form a helical membrane-spanning segment. The Cytoplasmic portion of the chain corresponds to 279 to 291 (SSPTLKRILKGKC).

This sequence belongs to the G-protein coupled receptor T2R family. Interacts with RTP3 and RTP4. In terms of tissue distribution, expressed in a subset of gustducin-positive taste receptor cells of the tongue. Expressed in circumvallate papillae and testis.

The protein localises to the cell membrane. Its function is as follows. Gustducin-coupled receptor implicated in the perception of bitter compounds in the oral cavity and the gastrointestinal tract. Signals through PLCB2 and the calcium-regulated cation channel TRPM5. The polypeptide is Taste receptor type 2 member 16 (TAS2R16) (Homo sapiens (Human)).